A 490-amino-acid polypeptide reads, in one-letter code: Lipoprotein lipase (490 aa).

The first 25 residues, 1 to 25 (MERGRGMGKTALLAVLCLCLRGAAG), serve as a signal peptide directing secretion. An interaction with GPIHBP1 region spans residues 32–53 (MNFEGIESKFSLRTPAEPDEDV). A disulfide bridge connects residues C54 and C67. N70 carries an N-linked (GlcNAc...) (complex) asparagine glycan. 3'-nitrotyrosine is present on Y121. Residue S159 is the Nucleophile of the active site. Catalysis depends on D183, which acts as the Charge relay system. A 3'-nitrotyrosine modification is found at Y191. Ca(2+)-binding residues include A194, R197, S199, and D202. The cysteines at positions 243 and 266 are disulfide-linked. The essential for determining substrate specificity stretch occupies residues 243-266 (CNLGEALRLIAEKGFSDVDQLVKC). Catalysis depends on H268, which acts as the Charge relay system. 2 disulfide bridges follow: C291–C310 and C302–C305. One can recognise a PLAT domain in the interval 341–464 (FHYQVKIHFF…KGEEAAIFVK (124 aa)). The residue at position 343 (Y343) is a 3'-nitrotyrosine. N-linked (GlcNAc...) asparagine glycosylation is found at N354 and N386. The segment at 417-421 (WSDWW) is important for interaction with lipoprotein particles. The important for heparin binding stretch occupies residues 430–434 (RVRVK). 430 to 441 (RVRVKSGETQKK) is a binding site for heparin. Residues 443-467 (VFCSRDGSSRLGKGEEAAIFVKCLE) are interaction with GPIHBP1. A disulfide bond links C445 and C465. Residues 471–490 (SRKRGGAKKASKENSAHESA) form a disordered region. Residues 480-490 (ASKENSAHESA) show a composition bias toward basic and acidic residues.

The protein belongs to the AB hydrolase superfamily. Lipase family. Homodimer. Interacts with GPIHBP1 with 1:1 stoichiometry. Interacts with APOC2; the interaction activates LPL activity in the presence of lipids. Interaction with heparan sulfate proteoglycans is required to protect LPL against loss of activity. Associates with lipoprotein particles in blood plasma. Interacts with LMF1 and SEL1L; interaction with SEL1L is required to prevent aggregation of newly synthesized LPL in the endoplasmic reticulum (ER), and for normal export of LPL from the ER to the extracellular space. Post-translationally, N-glycan at Asn-70 is a triantennary complex oligosaccharide containing sialic acid, galactose, mannose, and N-acetylglucosamine, the reducing GlcNAc being sulfated at C6. In terms of processing, tyrosine nitration after lipopolysaccharide (LPS) challenge down-regulates the lipase activity.

It localises to the cell membrane. The protein resides in the secreted. Its subcellular location is the extracellular space. The protein localises to the extracellular matrix. The catalysed reaction is a triacylglycerol + H2O = a diacylglycerol + a fatty acid + H(+). The enzyme catalyses a 1,2-diacyl-sn-glycero-3-phosphocholine + H2O = a 2-acyl-sn-glycero-3-phosphocholine + a fatty acid + H(+). It catalyses the reaction 1,2,3-tri-(9Z-octadecenoyl)-glycerol + H2O = di-(9Z)-octadecenoylglycerol + (9Z)-octadecenoate + H(+). It carries out the reaction 1,2-di-(9Z-octadecenoyl)-sn-glycero-3-phosphocholine + H2O = (9Z-octadecenoyl)-sn-glycero-3-phosphocholine + (9Z)-octadecenoate + H(+). The catalysed reaction is 1,2,3-tributanoylglycerol + H2O = dibutanoylglycerol + butanoate + H(+). The enzyme catalyses 1,2-dihexadecanoyl-sn-glycero-3-phosphocholine + H2O = hexadecanoyl-sn-glycero-3-phosphocholine + hexadecanoate + H(+). Ca(2+) binding promotes protein stability and formation of the active homodimer. Key enzyme in triglyceride metabolism. Catalyzes the hydrolysis of triglycerides from circulating chylomicrons and very low density lipoproteins (VLDL), and thereby plays an important role in lipid clearance from the blood stream, lipid utilization and storage. Although it has both phospholipase and triglyceride lipase activities it is primarily a triglyceride lipase with low but detectable phospholipase activity. Mediates margination of triglyceride-rich lipoprotein particles in capillaries. Recruited to its site of action on the luminal surface of vascular endothelium by binding to GPIHBP1 and cell surface heparan sulfate proteoglycans. The protein is Lipoprotein lipase (LPL) of Gallus gallus (Chicken).